Consider the following 254-residue polypeptide: Phosphate import ATP-binding protein PstB (254 aa).

In terms of domain architecture, ABC transporter spans 7–249 (MVAESMSFYY…PREKQTEDYI (243 aa)). ATP is bound at residue 39–46 (GPSGCGKS).

Belongs to the ABC transporter superfamily. Phosphate importer (TC 3.A.1.7) family. As to quaternary structure, the complex is composed of two ATP-binding proteins (PstB), two transmembrane proteins (PstC and PstA) and a solute-binding protein (PstS).

The protein localises to the cell inner membrane. It catalyses the reaction phosphate(out) + ATP + H2O = ADP + 2 phosphate(in) + H(+). In terms of biological role, part of the ABC transporter complex PstSACB involved in phosphate import. Responsible for energy coupling to the transport system. The chain is Phosphate import ATP-binding protein PstB from Chlorobium chlorochromatii (strain CaD3).